The chain runs to 347 residues: Phosphate acyltransferase (347 aa).

The protein belongs to the PlsX family. In terms of assembly, homodimer. Probably interacts with PlsY.

The protein resides in the cytoplasm. It catalyses the reaction a fatty acyl-[ACP] + phosphate = an acyl phosphate + holo-[ACP]. It participates in lipid metabolism; phospholipid metabolism. Catalyzes the reversible formation of acyl-phosphate (acyl-PO(4)) from acyl-[acyl-carrier-protein] (acyl-ACP). This enzyme utilizes acyl-ACP as fatty acyl donor, but not acyl-CoA. In Oleidesulfovibrio alaskensis (strain ATCC BAA-1058 / DSM 17464 / G20) (Desulfovibrio alaskensis), this protein is Phosphate acyltransferase.